We begin with the raw amino-acid sequence, 711 residues long: Ent-copalyl diphosphate synthase 1 (711 aa).

K145 contacts substrate. Mg(2+) is bound by residues D277 and D279. A DXDD motif motif is present at residues 277 to 280 (DIDD). K364 contributes to the substrate binding site.

The protein belongs to the terpene synthase family. Tpsc subfamily. It depends on Mg(2+) as a cofactor.

It carries out the reaction (2E,6E,10E)-geranylgeranyl diphosphate = ent-copalyl diphosphate. It functions in the pathway secondary metabolite biosynthesis; terpenoid biosynthesis. In terms of biological role, involved in the biosynthesis of ent-kaurene diterpenoids natural products such as oridonin, miltiradiene, eriocalyxin B and nezukol, known to exhibit antitumor, anti-inflammatory and antibacterial activities. Catalyzes the conversion of (2E,6E,10E)-geranylgeranyl diphosphate (GGPP) to ent-copalyl diphosphate (ent-CPP). The sequence is that of Ent-copalyl diphosphate synthase 1 from Isodon japonicus (Scutellaria japonica).